The primary structure comprises 113 residues: uncharacterized protein (113 aa).

This sequence belongs to the ycf68 family.

It is found in the plastid. The protein resides in the chloroplast. This is an uncharacterized protein from Eucalyptus globulus subsp. globulus (Tasmanian blue gum).